The following is a 108-amino-acid chain: UPF0060 membrane protein CJA_3703 (108 aa).

4 helical membrane passes run 6–26 (LLFV…YLWL), 31–51 (SIWL…LLTL), 61–81 (AAYG…VDGV), and 85–105 (AYDW…AMGW).

This sequence belongs to the UPF0060 family.

The protein localises to the cell inner membrane. In Cellvibrio japonicus (strain Ueda107) (Pseudomonas fluorescens subsp. cellulosa), this protein is UPF0060 membrane protein CJA_3703.